The chain runs to 1258 residues: Serine/threonine-protein kinase Nek1 (1258 aa).

The region spanning 4–258 (YVRLQKIGEG…VNSILEKGFI (255 aa)) is the Protein kinase domain. Residues 10–18 (IGEGSFGKA) and K33 each bind ATP. D128 (proton acceptor) is an active-site residue. At T156 the chain carries Phosphothreonine. T162 is subject to Phosphothreonine; by autocatalysis. The tract at residues 330 to 360 (HEKKPLQKHKQAHQTPEKRVNTGEERRKISE) is disordered. A compositionally biased stretch (basic and acidic residues) spans 344-360 (TPEKRVNTGEERRKISE). A phosphoserine mark is found at S414, S418, S428, and S438. 3 disordered regions span residues 578–600 (KLRG…EADM), 648–669 (KSSD…SKQQ), and 685–704 (VDSS…KTNN). Residues 579 to 591 (LRGEKKEANHSEG) are compositionally biased toward basic and acidic residues. A Phosphoserine modification is found at S653. At T661 the chain carries Phosphothreonine. The residue at position 664 (S664) is a Phosphoserine. Over residues 691 to 700 (DTRETSEEMQ) the composition is skewed to basic and acidic residues. S798, S834, S868, S881, S1052, and S1126 each carry phosphoserine. The tract at residues 1118–1171 (REQPGEEYSEEEESVLKNSDVEPTANGTDVADEDDNPSSESALNEEWHSDNSDG) is disordered.

Belongs to the protein kinase superfamily. NEK Ser/Thr protein kinase family. NIMA subfamily. Binds to CBY2. Found in a complex with CFAP410, NEK1 and SPATA7. Interacts with CFAP410. Interacts (via Ser-1052 phosphorylated form) with 14-3-3 proteins. Mg(2+) is required as a cofactor. High fetal expression in the brain and kidney.

Its subcellular location is the nucleus. It is found in the cytoplasm. It localises to the cytoskeleton. The protein resides in the microtubule organizing center. The protein localises to the centrosome. It carries out the reaction L-seryl-[protein] + ATP = O-phospho-L-seryl-[protein] + ADP + H(+). The catalysed reaction is L-threonyl-[protein] + ATP = O-phospho-L-threonyl-[protein] + ADP + H(+). In terms of biological role, phosphorylates serines and threonines, but also appears to possess tyrosine kinase activity. Involved in DNA damage checkpoint control and for proper DNA damage repair. In response to injury that includes DNA damage, NEK1 phosphorylates VDAC1 to limit mitochondrial cell death. May be implicated in the control of meiosis. Involved in cilium assembly. The chain is Serine/threonine-protein kinase Nek1 (NEK1) from Homo sapiens (Human).